We begin with the raw amino-acid sequence, 624 residues long: Chaperone protein HtpG (624 aa).

An a; substrate-binding region spans residues 1 to 336 (MKTQKKEVYN…SSDLPLNISR (336 aa)). Positions 337 to 552 (EILQDNSITE…STEMTTQMAK (216 aa)) are b. The interval 553–624 (LFSAAGQSVP…ISRMNKLLIK (72 aa)) is c.

This sequence belongs to the heat shock protein 90 family. Homodimer.

It is found in the cytoplasm. Functionally, molecular chaperone. Has ATPase activity. The protein is Chaperone protein HtpG of Buchnera aphidicola subsp. Acyrthosiphon pisum (strain APS) (Acyrthosiphon pisum symbiotic bacterium).